The sequence spans 201 residues: Mediator of RNA polymerase II transcription subunit 22 (201 aa).

Positions 93-123 form a coiled coil; the sequence is SVNESINQRNQQLRTLREECDKKLIALRDDI. Residues 182–201 form a disordered region; that stretch reads SQIHTPPHLNGHGAGMTEHT.

The protein belongs to the Mediator complex subunit 22 family. In terms of assembly, component of the Mediator complex.

The protein resides in the nucleus. In terms of biological role, component of the Mediator complex, a coactivator involved in the regulated transcription of nearly all RNA polymerase II-dependent genes. Mediator functions as a bridge to convey information from gene-specific regulatory proteins to the basal RNA polymerase II transcription machinery. Mediator is recruited to promoters by direct interactions with regulatory proteins and serves as a scaffold for the assembly of a functional preinitiation complex with RNA polymerase II and the general transcription factors. The sequence is that of Mediator of RNA polymerase II transcription subunit 22 (med22) from Xenopus laevis (African clawed frog).